Reading from the N-terminus, the 251-residue chain is uncharacterized protein (251 aa).

To M.jannaschii MJ1311.

This is an uncharacterized protein from Methanocaldococcus jannaschii (strain ATCC 43067 / DSM 2661 / JAL-1 / JCM 10045 / NBRC 100440) (Methanococcus jannaschii).